Reading from the N-terminus, the 427-residue chain is Glutamate-1-semialdehyde 2,1-aminomutase (427 aa).

Lysine 265 is subject to N6-(pyridoxal phosphate)lysine.

This sequence belongs to the class-III pyridoxal-phosphate-dependent aminotransferase family. HemL subfamily. As to quaternary structure, homodimer. Pyridoxal 5'-phosphate is required as a cofactor.

The protein resides in the cytoplasm. It catalyses the reaction (S)-4-amino-5-oxopentanoate = 5-aminolevulinate. It participates in porphyrin-containing compound metabolism; protoporphyrin-IX biosynthesis; 5-aminolevulinate from L-glutamyl-tRNA(Glu): step 2/2. This is Glutamate-1-semialdehyde 2,1-aminomutase from Burkholderia mallei (strain NCTC 10229).